Consider the following 320-residue polypeptide: 1-aminocyclopropane-1-carboxylate oxidase 3 (320 aa).

Residues 154–254 (PNFGTKVSNY…RMSIASFYNP (101 aa)) enclose the Fe2OG dioxygenase domain. The Fe cation site is built by His178, Asp180, and His235.

The protein belongs to the iron/ascorbate-dependent oxidoreductase family. Fe cation is required as a cofactor. Flowers.

It carries out the reaction 1-aminocyclopropane-1-carboxylate + L-ascorbate + O2 = ethene + L-dehydroascorbate + hydrogen cyanide + CO2 + 2 H2O. It participates in alkene biosynthesis; ethylene biosynthesis via S-adenosyl-L-methionine; ethylene from S-adenosyl-L-methionine: step 2/2. The sequence is that of 1-aminocyclopropane-1-carboxylate oxidase 3 (ACO3) from Cucumis melo (Muskmelon).